We begin with the raw amino-acid sequence, 497 residues long: Serine hydroxymethyltransferase (497 aa).

(6S)-5,6,7,8-tetrahydrofolate is bound by residues leucine 176 and 180-182 (GHL). Lysine 289 carries the post-translational modification N6-(pyridoxal phosphate)lysine.

It belongs to the SHMT family. In terms of assembly, homodimer. Requires pyridoxal 5'-phosphate as cofactor.

The protein localises to the cytoplasm. The enzyme catalyses (6R)-5,10-methylene-5,6,7,8-tetrahydrofolate + glycine + H2O = (6S)-5,6,7,8-tetrahydrofolate + L-serine. The protein operates within one-carbon metabolism; tetrahydrofolate interconversion. It functions in the pathway amino-acid biosynthesis; glycine biosynthesis; glycine from L-serine: step 1/1. Catalyzes the reversible interconversion of serine and glycine with tetrahydrofolate (THF) serving as the one-carbon carrier. This reaction serves as the major source of one-carbon groups required for the biosynthesis of purines, thymidylate, methionine, and other important biomolecules. Also exhibits THF-independent aldolase activity toward beta-hydroxyamino acids, producing glycine and aldehydes, via a retro-aldol mechanism. This Chlamydia felis (strain Fe/C-56) (Chlamydophila felis) protein is Serine hydroxymethyltransferase.